The following is a 532-amino-acid chain: Flavin-containing monooxygenase 3 (532 aa).

FAD is bound by residues 9-13 (GAGVS), Glu-32, 40-41 (LW), and 61-62 (NS). Residues 60–61 (SN) and 195–198 (SGCD) contribute to the NADP(+) site. The residue at position 401 (Ser-401) is a Phosphoserine. A helical transmembrane segment spans residues 510–530 (FFFHWLKLFAIPILLIAVFLV).

The protein belongs to the FMO family. FAD is required as a cofactor. As to expression, liver.

The protein resides in the microsome membrane. The protein localises to the endoplasmic reticulum membrane. The catalysed reaction is trimethylamine + NADPH + O2 = trimethylamine N-oxide + NADP(+) + H2O. The enzyme catalyses N,N-dimethylaniline + NADPH + O2 + H(+) = N,N-dimethylaniline N-oxide + NADP(+) + H2O. It catalyses the reaction hypotaurine + NADPH + O2 + H(+) = taurine + NADP(+) + H2O. It carries out the reaction (S)-nicotine + NADPH + O2 = trans-(S)-nicotine N(1')-oxide + NADP(+) + H2O. The catalysed reaction is albendazole + NADPH + O2 + H(+) = albendazole S-oxide + NADP(+) + H2O. In terms of biological role, essential hepatic enzyme that catalyzes the oxygenation of a wide variety of nitrogen- and sulfur-containing compounds including drugs as well as dietary compounds. Plays an important role in the metabolism of trimethylamine (TMA), via the production of trimethylamine N-oxide (TMAO) metabolite. TMA is generated by the action of gut microbiota using dietary precursors such as choline, choline containing compounds, betaine or L-carnitine. By regulating TMAO concentration, FMO3 directly impacts both platelet responsiveness and rate of thrombus formation. This chain is Flavin-containing monooxygenase 3 (FMO3), found in Homo sapiens (Human).